Consider the following 178-residue polypeptide: Probable chorismate pyruvate-lyase (178 aa).

Substrate-binding residues include Met-37, Arg-78, Leu-114, and Glu-165.

This sequence belongs to the UbiC family.

It localises to the cytoplasm. It catalyses the reaction chorismate = 4-hydroxybenzoate + pyruvate. It participates in cofactor biosynthesis; ubiquinone biosynthesis. Removes the pyruvyl group from chorismate, with concomitant aromatization of the ring, to provide 4-hydroxybenzoate (4HB) for the ubiquinone pathway. The sequence is that of Probable chorismate pyruvate-lyase from Aeromonas salmonicida (strain A449).